Consider the following 348-residue polypeptide: Lipoyl synthase (348 aa).

The [4Fe-4S] cluster site is built by Cys-55, Cys-60, Cys-66, Cys-81, Cys-85, Cys-88, and Ser-292. In terms of domain architecture, Radical SAM core spans 67 to 281; that stretch reads WESREATFLI…SDEAYEIGFA (215 aa).

Belongs to the radical SAM superfamily. Lipoyl synthase family. It depends on [4Fe-4S] cluster as a cofactor.

It is found in the cytoplasm. The enzyme catalyses [[Fe-S] cluster scaffold protein carrying a second [4Fe-4S](2+) cluster] + N(6)-octanoyl-L-lysyl-[protein] + 2 oxidized [2Fe-2S]-[ferredoxin] + 2 S-adenosyl-L-methionine + 4 H(+) = [[Fe-S] cluster scaffold protein] + N(6)-[(R)-dihydrolipoyl]-L-lysyl-[protein] + 4 Fe(3+) + 2 hydrogen sulfide + 2 5'-deoxyadenosine + 2 L-methionine + 2 reduced [2Fe-2S]-[ferredoxin]. It functions in the pathway protein modification; protein lipoylation via endogenous pathway; protein N(6)-(lipoyl)lysine from octanoyl-[acyl-carrier-protein]: step 2/2. In terms of biological role, catalyzes the radical-mediated insertion of two sulfur atoms into the C-6 and C-8 positions of the octanoyl moiety bound to the lipoyl domains of lipoate-dependent enzymes, thereby converting the octanoylated domains into lipoylated derivatives. The polypeptide is Lipoyl synthase (Corynebacterium efficiens (strain DSM 44549 / YS-314 / AJ 12310 / JCM 11189 / NBRC 100395)).